Here is a 243-residue protein sequence, read N- to C-terminus: tRNA pseudouridine synthase A (243 aa).

Catalysis depends on aspartate 54, which acts as the Nucleophile. Tyrosine 112 contributes to the substrate binding site.

This sequence belongs to the tRNA pseudouridine synthase TruA family. In terms of assembly, homodimer.

The enzyme catalyses uridine(38/39/40) in tRNA = pseudouridine(38/39/40) in tRNA. In terms of biological role, formation of pseudouridine at positions 38, 39 and 40 in the anticodon stem and loop of transfer RNAs. The sequence is that of tRNA pseudouridine synthase A from Aster yellows witches'-broom phytoplasma (strain AYWB).